The sequence spans 3799 residues: Polyketide synthase GfsE (3799 aa).

In terms of domain architecture, Ketosynthase family 3 (KS3) 1 spans 33–459 (HEPIAIIGMS…GTNAHAILEE (427 aa)). Module regions lie at residues 33-1730 (HEPI…RSSA) and 1749-3494 (DEAI…RTDL). Residues Cys-206, His-341, and His-381 each act as for beta-ketoacyl synthase 1 activity in the active site. The tract at residues 462 to 496 (AATGNPTEADTDQEPAASASPDRTTTLPAVPWPLS) is disordered. One can recognise a Malonyl-CoA:ACP transacylase (MAT) 1 domain in the interval 582–895 (FVFPGQGSQW…LGEAHAHGAD (314 aa)). Positions 944–1069 (HPLFGAVVEV…GVLELEARPE (126 aa)) are N-terminal hotdog fold 1. The region spanning 944-1222 (HPLFGAVVEV…SRPVAEEQLG (279 aa)) is the PKS/mFAS DH 1 domain. The Proton acceptor; for dehydratase activity 1 role is filled by His-976. A C-terminal hotdog fold 1 region spans residues 1081–1222 (AEVVPVEGLY…SRPVAEEQLG (142 aa)). Asp-1142 functions as the Proton donor; for dehydratase activity 1 in the catalytic mechanism. In terms of domain architecture, Ketoreductase (KR) 1 spans 1382–1554 (LLVTGASGVL…TSLSWGLWAE (173 aa)). In terms of domain architecture, Carrier 1 spans 1652-1730 (EAERAVLELV…ALATHIRSSA (79 aa)). Ser-1690 carries the post-translational modification O-(pantetheine 4'-phosphoryl)serine. Residues 1749–2174 (DEAIAIVGMA…GTNAHVILEQ (426 aa)) form the Ketosynthase family 3 (KS3) 2 domain. Catalysis depends on for beta-ketoacyl synthase 2 activity residues Cys-1921, His-2056, and His-2096. Residues 2284–2604 (FVFPGQGSQW…VSLAKVHTHG (321 aa)) enclose the Malonyl-CoA:ACP transacylase (MAT) 2 domain. An N-terminal hotdog fold 2 region spans residues 2656 to 2781 (HPLLTGVVDL…GTLAVDADHD (126 aa)). The PKS/mFAS DH 2 domain occupies 2656-2936 (HPLLTGVVDL…TRPVTAAQFA (281 aa)). His-2688 acts as the Proton acceptor; for dehydratase activity 2 in catalysis. Residues 2794–2936 (ADPVDLTEVY…TRPVTAAQFA (143 aa)) form a C-terminal hotdog fold 2 region. The Proton donor; for dehydratase activity 2 role is filled by Asp-2855. The Ketoreductase (KR) 2 domain occupies 3142–3314 (LLVTGASGVL…TALSWGLWAE (173 aa)). Residues 3419-3494 (AALLDLVGAQ…ALAAQLRTDL (76 aa)) enclose the Carrier 2 domain. Residue Ser-3454 is modified to O-(pantetheine 4'-phosphoryl)serine.

Pantetheine 4'-phosphate serves as cofactor.

It participates in antibiotic biosynthesis. Its function is as follows. Fifth protein in the synthesis of the 16-membered macrolide antibiotics FD-891 and FD-892. Composed of 2 modules. Modifies the product of GfsD by multiple rounds of addition of methylmalonyl-CoA and other modifications to help generate the final products. This chain is Polyketide synthase GfsE, found in Streptomyces halstedii.